We begin with the raw amino-acid sequence, 1928 residues long: Myosin-1 (1928 aa).

The Myosin N-terminal SH3-like domain occupies 8–71 (SSNMIVWIPD…RISDVFPVNP (64 aa)). The Myosin motor domain maps to 75–791 (DKVENMSELT…VLADLEKQKD (717 aa)). An ATP-binding site is contributed by 180–187 (GESGAGKT). The interval 460 to 529 (IGLLDIAGFE…LQLTIDLIES (70 aa)) is actin-binding. A compositionally biased stretch (polar residues) spans 629-641 (SSSAGVEANISNQ). Residues 629–657 (SSSAGVEANISNQEVKKSARTSTFKTTSS) are disordered. The IQ domain occupies 794 to 823 (LNNIMIKLTATIRGYTVRKEITYHLQKLKK). A coiled-coil region spans residues 856 to 1911 (SSNDMTRTKK…FWKSRYESTM (1056 aa)).

This sequence belongs to the TRAFAC class myosin-kinesin ATPase superfamily. Myosin family.

Required for cell division. The chain is Myosin-1 (MYO1) from Saccharomyces cerevisiae (strain ATCC 204508 / S288c) (Baker's yeast).